The sequence spans 804 residues: Phenylalanine--tRNA ligase beta subunit (804 aa).

The tRNA-binding domain maps to 40-161 (FSMIDYLIIG…KANLGDTEVY (122 aa)). The B5 domain occupies 413 to 486 (EYHQQVKVNY…KILNINLFQP (74 aa)). Mg(2+) contacts are provided by Asp-464, Asp-470, Glu-473, and Glu-474. The region spanning 710-804 (DHYQEVTRDI…DLMKTKQILI (95 aa)) is the FDX-ACB domain.

This sequence belongs to the phenylalanyl-tRNA synthetase beta subunit family. Type 1 subfamily. As to quaternary structure, tetramer of two alpha and two beta subunits. Mg(2+) serves as cofactor.

Its subcellular location is the cytoplasm. It carries out the reaction tRNA(Phe) + L-phenylalanine + ATP = L-phenylalanyl-tRNA(Phe) + AMP + diphosphate + H(+). The sequence is that of Phenylalanine--tRNA ligase beta subunit from Mycoplasmoides gallisepticum (strain R(low / passage 15 / clone 2)) (Mycoplasma gallisepticum).